We begin with the raw amino-acid sequence, 367 residues long: Methylthioribose-1-phosphate isomerase (367 aa).

Substrate-binding positions include 48-50, arginine 91, and glutamine 215; that span reads RGA. Aspartate 256 (proton donor) is an active-site residue. 266 to 267 serves as a coordination point for substrate; it reads NK.

The protein belongs to the eIF-2B alpha/beta/delta subunits family. MtnA subfamily.

The catalysed reaction is 5-(methylsulfanyl)-alpha-D-ribose 1-phosphate = 5-(methylsulfanyl)-D-ribulose 1-phosphate. The protein operates within amino-acid biosynthesis; L-methionine biosynthesis via salvage pathway; L-methionine from S-methyl-5-thio-alpha-D-ribose 1-phosphate: step 1/6. Its function is as follows. Catalyzes the interconversion of methylthioribose-1-phosphate (MTR-1-P) into methylthioribulose-1-phosphate (MTRu-1-P). This chain is Methylthioribose-1-phosphate isomerase, found in Syntrophus aciditrophicus (strain SB).